A 92-amino-acid chain; its full sequence is MKDYQYPLDLDWTTEEMVIVTNMWTAVEQANETGLPVDKFLTTYQQFKTVVKSIGEEKRLGREFENASGYSLYRTLQQAKKQGSGKLKLGDD.

The protein belongs to the UPF0223 family.

The protein is UPF0223 protein EF_2462 of Enterococcus faecalis (strain ATCC 700802 / V583).